A 296-amino-acid polypeptide reads, in one-letter code: Protoheme IX farnesyltransferase (296 aa).

At 1–9 (MMFKQYLQV) the chain is on the cytoplasmic side. The helical transmembrane segment at 10–28 (TKPGIIFGNLISVIGGFLL) threads the bilayer. Residues 29 to 37 (ASKGSIDYP) lie on the Periplasmic side of the membrane. Residues 38-56 (LFIYTLVGVSLVVASGCVF) form a helical membrane-spanning segment. Residues 57-78 (NNYIDRDIDRKMERTKNRVLVK) are Cytoplasmic-facing. The chain crosses the membrane as a helical span at residues 79 to 97 (GLISPAVSLVYATLLGIAG). The Periplasmic segment spans residues 98–107 (FMLLWFGANP). Residues 108-126 (LACWLGVMGFVVYVGVYSL) traverse the membrane as a helical segment. The Cytoplasmic segment spans residues 127–197 (YMKRHSVYGT…YQAANIPVLP (71 aa)). Residues 198 to 216 (VVKGISVAKNHITLYIIAF) form a helical membrane-spanning segment. The Periplasmic portion of the chain corresponds to 217–228 (AVATLMLSLGGY). Residues 229-247 (AGYKYLVVAAAVSVWWLGM) form a helical membrane-spanning segment. Residues 248 to 268 (ALRGYKVADDRIWARKLFGFS) lie on the Cytoplasmic side of the membrane. Residues 269–287 (IIAITALSVMMSVDFMVPD) form a helical membrane-spanning segment. Residues 288–296 (SHTLLAAVW) are Periplasmic-facing.

This sequence belongs to the UbiA prenyltransferase family. Protoheme IX farnesyltransferase subfamily.

It is found in the cell inner membrane. It catalyses the reaction heme b + (2E,6E)-farnesyl diphosphate + H2O = Fe(II)-heme o + diphosphate. Its pathway is porphyrin-containing compound metabolism; heme O biosynthesis; heme O from protoheme: step 1/1. Functionally, converts heme B (protoheme IX) to heme O by substitution of the vinyl group on carbon 2 of heme B porphyrin ring with a hydroxyethyl farnesyl side group. This Escherichia coli O139:H28 (strain E24377A / ETEC) protein is Protoheme IX farnesyltransferase.